Consider the following 337-residue polypeptide: Protein FAM169B (337 aa).

Positions serine 278 to arginine 326 are disordered. Residues threonine 291–histidine 306 are compositionally biased toward polar residues. A compositionally biased stretch (basic and acidic residues) spans glycine 307–glutamine 322.

This sequence belongs to the FAM169 family.

This is Protein FAM169B (Fam169b) from Mus musculus (Mouse).